The sequence spans 810 residues: MIQQKVLFISLVAVTLGLGLGLGLKESVQPQAQSWSCSKLRCGEKRIANVLCSCSDDCLEKKDCCTDYKSICKGETSWLKDKCASSGATQCPAGFEQSPLILFSMDGFRAGYLENWDSLMPNINKLKTCGTHAKYMRAVYPTKTFVNHYTIATGLYPESHGIIDNNIYDVNLNLNFSLSSSTARNPAWWGGQPIWHTATYQGLKAATYFWPGSEVKINGSYPTIFKNYNKSIPFEARVTEVLKWLDLPKAKRPDFLTLYIEEPDTTGHKYGPVSGEIIKALQMADRTLGMLMEGLKQRNLHNCVNLILLADHGMEEISCDRLEYMANYFNNVDFFMYEGPAPRIRSKNVPKDFYTFDSEGIVKNLTCRKPKQYFKAYLSKDLPKRLHYANNIRIDKVNLMVDQQWMAVRDKKFTRCKGGTHGYDNEFKSMQAIFLAHGPGFNEKNEVTSFENIEVYNLMCDLLKLKPAPNNGTHGSLNHLLKNPFYTPSPAKEQSSPLSCPFGPVPSPDVSGCKCSSITELEKVNQRLNLNNQAKTESEAHNLPYGRPQVLQNHSKYCLLHQAKYISAYSQDILMPLWSSYTIYRSTSTSVPPSASDCLRLDVRIPAAQSQTCSNYQPDLTITPGFLYPPNFNSSNFEQYDALITSNIVPMFKGFTRLWNYFHTTLIPKYARERNGLNVISGPIFDYNYDGHFDSYDTIKQHVNNTKIPIPTHYFVVLTSCENQINTPLNCLGPLKVLSFILPHRPDNSESCADTSPENLWVEERIQIHTARVRDVELLTGLNFYSGLKQPLPETLQLKTFLPIFVNPVN.

The signal sequence occupies residues 1 to 23; that stretch reads MIQQKVLFISLVAVTLGLGLGLG. Residues 33–77 form the SMB domain; sequence QSWSCSKLRCGEKRIANVLCSCSDDCLEKKDCCTDYKSICKGETS. Cystine bridges form between cysteine 37–cysteine 42, cysteine 37–cysteine 54, cysteine 42–cysteine 72, cysteine 52–cysteine 54, cysteine 52–cysteine 65, cysteine 58–cysteine 64, cysteine 65–cysteine 72, cysteine 83–cysteine 129, and cysteine 91–cysteine 303. 2 residues coordinate a divalent metal cation: aspartate 106 and threonine 144. The AMP-threonine intermediate role is filled by threonine 144. N-linked (GlcNAc...) asparagine glycans are attached at residues asparagine 175, asparagine 218, and asparagine 229. Residue lysine 230 participates in AMP binding. The a divalent metal cation site is built by aspartate 264, histidine 268, aspartate 311, and histidine 312. Histidine 268 lines the AMP pocket. Intrachain disulfides connect cysteine 319–cysteine 416, cysteine 367–cysteine 752, cysteine 500–cysteine 558, cysteine 513–cysteine 613, cysteine 515–cysteine 598, and cysteine 721–cysteine 731. An N-linked (GlcNAc...) asparagine glycan is attached at asparagine 364. A divalent metal cation is bound at residue histidine 421. N-linked (GlcNAc...) asparagine glycosylation is found at asparagine 471, asparagine 553, asparagine 633, and asparagine 704.

Belongs to the nucleotide pyrophosphatase/phosphodiesterase family. In terms of assembly, monomer cleaved in two subunits; disulfide-linked. Is synthesized as a single-chain protein and is subsequently cleaved to form a two-subunit protein held together with disulfide bonds. The cofactor is a divalent metal cation. As to expression, expressed by venom gland.

It is found in the secreted. It carries out the reaction ADP + H2O = AMP + phosphate + H(+). Functionally, hydrolyzes ADP with high activity. Shows weak or no activity on 5'-AMP, 5'-GMP, 3'-AMP, ATP, cAMP, and cGMP. Is devoid of monophosphatase and proteinase activities. Dose-dependently inhibits platelet aggregation induced by ADP (IC(50)=0.99 uM) and collagen (IC(50)=1.4 uM). In Crotalus adamanteus (Eastern diamondback rattlesnake), this protein is Venom phosphodiesterase 2.